A 160-amino-acid chain; its full sequence is NADH-quinone oxidoreductase subunit I (160 aa).

2 consecutive 4Fe-4S ferredoxin-type domains span residues 51-80 and 91-120; these read RRYKNGEERCIACKLCEVVCPAQAITIEAA and TKYDIDMTKCIYCGFCQEACPVDAIVEGPN. [4Fe-4S] cluster-binding residues include Cys-60, Cys-63, Cys-66, Cys-70, Cys-100, Cys-103, Cys-106, and Cys-110.

Belongs to the complex I 23 kDa subunit family. As to quaternary structure, NDH-1 is composed of 14 different subunits. Subunits NuoA, H, J, K, L, M, N constitute the membrane sector of the complex. [4Fe-4S] cluster is required as a cofactor.

Its subcellular location is the cell inner membrane. The enzyme catalyses a quinone + NADH + 5 H(+)(in) = a quinol + NAD(+) + 4 H(+)(out). Its function is as follows. NDH-1 shuttles electrons from NADH, via FMN and iron-sulfur (Fe-S) centers, to quinones in the respiratory chain. The immediate electron acceptor for the enzyme in this species is believed to be ubiquinone. Couples the redox reaction to proton translocation (for every two electrons transferred, four hydrogen ions are translocated across the cytoplasmic membrane), and thus conserves the redox energy in a proton gradient. The protein is NADH-quinone oxidoreductase subunit I of Neorickettsia sennetsu (strain ATCC VR-367 / Miyayama) (Ehrlichia sennetsu).